An 86-amino-acid chain; its full sequence is Large ribosomal subunit protein uL23 (86 aa).

It belongs to the universal ribosomal protein uL23 family. Part of the 50S ribosomal subunit. Contacts protein L29.

Binds to 23S rRNA. One of the proteins that surrounds the polypeptide exit tunnel on the outside of the ribosome. The sequence is that of Large ribosomal subunit protein uL23 from Methanobrevibacter smithii (strain ATCC 35061 / DSM 861 / OCM 144 / PS).